Here is a 153-residue protein sequence, read N- to C-terminus: uncharacterized protein (153 aa).

This is an uncharacterized protein from Allochromatium vinosum (strain ATCC 17899 / DSM 180 / NBRC 103801 / NCIMB 10441 / D) (Chromatium vinosum).